Here is a 104-residue protein sequence, read N- to C-terminus: Large ribosomal subunit protein uL24 (104 aa).

Belongs to the universal ribosomal protein uL24 family. In terms of assembly, part of the 50S ribosomal subunit.

Functionally, one of two assembly initiator proteins, it binds directly to the 5'-end of the 23S rRNA, where it nucleates assembly of the 50S subunit. In terms of biological role, one of the proteins that surrounds the polypeptide exit tunnel on the outside of the subunit. The sequence is that of Large ribosomal subunit protein uL24 from Brevibacillus brevis (strain 47 / JCM 6285 / NBRC 100599).